Consider the following 157-residue polypeptide: Transcription elongation factor GreA (157 aa).

Basic and acidic residues predominate over residues E25–L43. A disordered region spans residues E25 to A47. Positions L43–D79 form a coiled coil.

Belongs to the GreA/GreB family.

In terms of biological role, necessary for efficient RNA polymerase transcription elongation past template-encoded arresting sites. The arresting sites in DNA have the property of trapping a certain fraction of elongating RNA polymerases that pass through, resulting in locked ternary complexes. Cleavage of the nascent transcript by cleavage factors such as GreA or GreB allows the resumption of elongation from the new 3'terminus. GreA releases sequences of 2 to 3 nucleotides. This is Transcription elongation factor GreA from Amoebophilus asiaticus (strain 5a2).